Here is a 159-residue protein sequence, read N- to C-terminus: 6,7-dimethyl-8-ribityllumazine synthase (159 aa).

Residues Trp-26, 58 to 60 (AIE), and 80 to 82 (VVI) each bind 5-amino-6-(D-ribitylamino)uracil. Residue 85-86 (ET) coordinates (2S)-2-hydroxy-3-oxobutyl phosphate. His-88 functions as the Proton donor in the catalytic mechanism. Asn-113 lines the 5-amino-6-(D-ribitylamino)uracil pocket. Residue Arg-127 coordinates (2S)-2-hydroxy-3-oxobutyl phosphate.

Belongs to the DMRL synthase family. As to quaternary structure, homopentamer.

The catalysed reaction is (2S)-2-hydroxy-3-oxobutyl phosphate + 5-amino-6-(D-ribitylamino)uracil = 6,7-dimethyl-8-(1-D-ribityl)lumazine + phosphate + 2 H2O + H(+). It participates in cofactor biosynthesis; riboflavin biosynthesis; riboflavin from 2-hydroxy-3-oxobutyl phosphate and 5-amino-6-(D-ribitylamino)uracil: step 1/2. Functionally, catalyzes the formation of 6,7-dimethyl-8-ribityllumazine by condensation of 5-amino-6-(D-ribitylamino)uracil with 3,4-dihydroxy-2-butanone 4-phosphate. This is the penultimate step in the biosynthesis of riboflavin. The chain is 6,7-dimethyl-8-ribityllumazine synthase from Mycolicibacterium gilvum (strain PYR-GCK) (Mycobacterium gilvum (strain PYR-GCK)).